Reading from the N-terminus, the 476-residue chain is Monodehydroascorbate reductase 2, peroxisomal (476 aa).

Topologically, residues 1-3 (MGR) are cytoplasmic. A helical transmembrane segment spans residues 4-24 (AFVHVILGGGVAAGYAALEFA). Residues 12–15 (GGVA), Glu-40, Arg-47, Lys-52, and 146–147 (RN) contribute to the FAD site. The Peroxisomal portion of the chain corresponds to 25–447 (RRGGYSRGEL…GGLALGEKPT (423 aa)). NAD(+)-binding positions include 171 to 177 (GGYIGME), Glu-195, Arg-201, and Gly-260. Residue 173-177 (YIGME) participates in NADP(+) binding. NADP(+) is bound by residues Arg-201 and Gly-260. Asp-297 is an FAD binding site. 314-315 (EH) contacts NAD(+). 314–315 (EH) is an NADP(+) binding site. Residue Val-316 participates in FAD binding. Arg-320 provides a ligand contact to L-ascorbate. Position 346 (Tyr-346) interacts with FAD. Tyr-346 contributes to the NAD(+) binding site. Tyr-346 is a binding site for NADP(+). Position 348 (Arg-348) interacts with L-ascorbate. A helical transmembrane segment spans residues 448-468 (YVWHATAGVIAAASIAAFGYW). Over 469–476 (YGRKRRRW) the chain is Cytoplasmic.

The protein belongs to the FAD-dependent oxidoreductase family. It depends on FAD as a cofactor.

The protein localises to the peroxisome membrane. The enzyme catalyses 2 monodehydro-L-ascorbate radical + NADH + H(+) = 2 L-ascorbate + NAD(+). In terms of biological role, catalyzes the conversion of monodehydroascorbate to ascorbate, oxidizing NADH in the process. Ascorbate is a major antioxidant against reactive oxygen species (ROS) and nitric oxide (NO). This chain is Monodehydroascorbate reductase 2, peroxisomal, found in Oryza sativa subsp. japonica (Rice).